The sequence spans 42 residues: Large ribosomal subunit protein bL36 (42 aa).

Belongs to the bacterial ribosomal protein bL36 family.

The polypeptide is Large ribosomal subunit protein bL36 (Ehrlichia canis (strain Jake)).